A 216-amino-acid chain; its full sequence is Large ribosomal subunit protein uL1 (216 aa).

It belongs to the universal ribosomal protein uL1 family. In terms of assembly, component of the large ribosomal subunit.

The protein localises to the cytoplasm. In terms of biological role, component of the large ribosomal subunit. The ribosome is a large ribonucleoprotein complex responsible for the synthesis of proteins in the cell. The sequence is that of Large ribosomal subunit protein uL1 (rpl10a) from Danio rerio (Zebrafish).